Reading from the N-terminus, the 594-residue chain is Protein CBFA2T2 (594 aa).

Serine 24 carries the phosphoserine modification. A Glycyl lysine isopeptide (Lys-Gly) (interchain with G-Cter in SUMO2) cross-link involves residue lysine 29. The disordered stretch occupies residues 48 to 96 (GGPRPVSFTPTALSNGINHSPPTLNGAPSPPQRFSNGPASSTSSALTNQ). Composition is skewed to polar residues over residues 55–70 (FTPT…SPPT) and 79–96 (QRFS…LTNQ). The tract at residues 98-206 (LPATCGARQL…QHEHLLLNTS (109 aa)) is interaction with PRDM14. Positions 104 to 199 (ARQLSKLKRF…TPSQYLAQHE (96 aa)) constitute a TAFH domain. A disordered region spans residues 220-257 (VHGNGKRPSPERRDENNFERDTVPPEPPAKRVCTISPA). Residues 227-242 (PSPERRDENNFERDTV) show a composition bias toward basic and acidic residues. A Phosphoserine modification is found at serine 255. The tract at residues 322 to 368 (QDELVDHRLTEREWADEWKHLDHALNCIMEMVEKTRRSMAVLRRCQE) is nervy homology region 2 (NHR2). The tract at residues 388 to 416 (RKTGTELVSRQHSPGSTDSLSNDSQREFT) is disordered. Over residues 393–410 (ELVSRQHSPGSTDSLSND) the composition is skewed to polar residues. A Phosphoserine modification is found at serine 400. The tract at residues 426–475 (VEFWKKTEEAVNKVKIQAMSEVQKAVAEAEQKAFEVIATERARMEQTIAD) is nervy homology region 3 (NHR3). Lysine 440 participates in a covalent cross-link: Glycyl lysine isopeptide (Lys-Gly) (interchain with G-Cter in SUMO2). The stretch at 442–482 (QAMSEVQKAVAEAEQKAFEVIATERARMEQTIADVKRQAAE) forms a coiled coil. Zn(2+)-binding residues include cysteine 498, cysteine 501, cysteine 509, cysteine 512, cysteine 518, cysteine 522, histidine 530, and cysteine 534. The MYND-type zinc-finger motif lies at 498-534 (CWNCGRKASETCSGCNIARYCGSFCQHKDWERHHRLC). The tract at residues 538-594 (LHGHSPHSQSRPLLPGGRGSARSADCSVPSPALDKTSATTSRSSTPASVTAIDANGL) is disordered. A Phosphoserine modification is found at serine 567. Over residues 573–588 (TSATTSRSSTPASVTA) the composition is skewed to low complexity.

Belongs to the CBFA2T family. As to quaternary structure, homooligomer. Homotetramerization is mediated by the NHR2 domain. Interacts with CBFA2T3/MTG16. Can interact with RUNX1T1/CBFA2T1. Heterotetramerization between members of the CBFA2T family is proposed. Interacts with RBP, GFI1, TCF4, PRDM14. Interacts with TAL1 and CBFA2T3/MTG16; the heteromer with CBFA2T3/MTG16 may function in repression of TAL1. Expressed in embryonic stem cells.

It localises to the nucleus. In terms of biological role, transcriptional corepressor which facilitates transcriptional repression via its association with DNA-binding transcription factors and recruitment of other corepressors and histone-modifying enzymes. Via association with PRDM14 is involved in regulation of embryonic stem cell (ESC) pluripotency. Involved in primordial germ cell (PCG) formation. Stabilizes PRDM14 and OCT4 on chromatin in a homooligomerization-dependent mannerCan repress the expression of MMP7 in a ZBTB33-dependent manner. Through heteromerization with CBFA2T3/MTG16 may be involved in regulation of the proliferation and the differentiation of erythroid progenitors by repressing the expression of TAL1 target genes. Required for the maintenance of the secretory cell lineage in the small intestine. Can inhibit Notch signaling probably by association with RBPJ and may be involved in GFI1-mediated Paneth cell differentiation. This is Protein CBFA2T2 (Cbfa2t2) from Mus musculus (Mouse).